A 157-amino-acid polypeptide reads, in one-letter code: Protein-export protein SecB (157 aa).

It belongs to the SecB family. In terms of assembly, homotetramer, a dimer of dimers. One homotetramer interacts with 1 SecA dimer.

It localises to the cytoplasm. One of the proteins required for the normal export of preproteins out of the cell cytoplasm. It is a molecular chaperone that binds to a subset of precursor proteins, maintaining them in a translocation-competent state. It also specifically binds to its receptor SecA. The chain is Protein-export protein SecB from Shewanella frigidimarina (strain NCIMB 400).